The sequence spans 646 residues: Acetyl-coenzyme A synthetase (646 aa).

Residues 190–193 (RAGK) and Thr-309 each bind CoA. Residues 385 to 387 (GEP), 409 to 414 (DTWWQT), Asp-498, and Arg-513 each bind ATP. CoA is bound at residue Ser-521. Arg-524 provides a ligand contact to ATP. Residues Val-535, His-537, and Val-540 each coordinate Mg(2+). Arg-582 contacts CoA. Lys-607 is subject to N6-acetyllysine.

The protein belongs to the ATP-dependent AMP-binding enzyme family. It depends on Mg(2+) as a cofactor. Post-translationally, acetylated. Deacetylation by the SIR2-homolog deacetylase activates the enzyme.

It catalyses the reaction acetate + ATP + CoA = acetyl-CoA + AMP + diphosphate. In terms of biological role, catalyzes the conversion of acetate into acetyl-CoA (AcCoA), an essential intermediate at the junction of anabolic and catabolic pathways. AcsA undergoes a two-step reaction. In the first half reaction, AcsA combines acetate with ATP to form acetyl-adenylate (AcAMP) intermediate. In the second half reaction, it can then transfer the acetyl group from AcAMP to the sulfhydryl group of CoA, forming the product AcCoA. The polypeptide is Acetyl-coenzyme A synthetase (Pseudoalteromonas atlantica (strain T6c / ATCC BAA-1087)).